Consider the following 175-residue polypeptide: MATALVLGYSAFDLGLFSDKDPRLKLIKKAIRKDLEAMAADGVSWLVFTGSLGFEYWVLEVAQEMKTEYGFQLATIFAFETHGENWNEGNQMKLSRFKQVDFVKYAYPRYEHKGQLRDYQQFLLENTTSSYLFYDEENETKLAYFYQKMKNQEDYFIKRLTFDQLNELAENFSEN.

This sequence belongs to the UPF0398 family.

The polypeptide is UPF0398 protein SPD_0338 (Streptococcus pneumoniae serotype 2 (strain D39 / NCTC 7466)).